The following is a 171-amino-acid chain: UPF0312 protein SAR2769 (171 aa).

It belongs to the UPF0312 family.

The chain is UPF0312 protein SAR2769 from Staphylococcus aureus (strain MRSA252).